Here is a 185-residue protein sequence, read N- to C-terminus: 4-hydroxy-tetrahydrodipicolinate reductase (185 aa).

NAD(+) contacts are provided by residues 12-17 (GAGGRM) and E38. R39 contributes to the NADP(+) binding site. NAD(+) contacts are provided by residues 102–104 (GTT) and 126–129 (AANF). Catalysis depends on H159, which acts as the Proton donor/acceptor. H160 is a binding site for (S)-2,3,4,5-tetrahydrodipicolinate. Catalysis depends on K163, which acts as the Proton donor. 169-170 (GT) contacts (S)-2,3,4,5-tetrahydrodipicolinate.

It belongs to the DapB family. As to quaternary structure, homotetramer.

It localises to the cytoplasm. It catalyses the reaction (S)-2,3,4,5-tetrahydrodipicolinate + NAD(+) + H2O = (2S,4S)-4-hydroxy-2,3,4,5-tetrahydrodipicolinate + NADH + H(+). It carries out the reaction (S)-2,3,4,5-tetrahydrodipicolinate + NADP(+) + H2O = (2S,4S)-4-hydroxy-2,3,4,5-tetrahydrodipicolinate + NADPH + H(+). It functions in the pathway amino-acid biosynthesis; L-lysine biosynthesis via DAP pathway; (S)-tetrahydrodipicolinate from L-aspartate: step 4/4. Catalyzes the conversion of 4-hydroxy-tetrahydrodipicolinate (HTPA) to tetrahydrodipicolinate. The chain is 4-hydroxy-tetrahydrodipicolinate reductase (dapB) from Klebsiella pneumoniae.